The sequence spans 1132 residues: Tyrosine-protein kinase JAK2 (1132 aa).

The interaction with cytokine/interferon/growth hormone receptors stretch occupies residues 1 to 239; the sequence is MGMACLTMTE…RYRFRRFIQQ (239 aa). The FERM domain maps to 37-380; the sequence is PVLQVYLYHS…GYYRLTADAH (344 aa). Tyrosine 119 is subject to Phosphotyrosine; by autocatalysis. A phosphotyrosine mark is found at tyrosine 372 and tyrosine 373. One can recognise an SH2; atypical domain in the interval 401–482; that stretch reads HGPISMDFAI…SLKDLLNCYQ (82 aa). A Phosphoserine modification is found at serine 523. The region spanning 545–809 is the Protein kinase 1 domain; sequence LIFNESLGQG…AIIRDLNSLF (265 aa). 2 positions are modified to phosphotyrosine: tyrosine 570 and tyrosine 813. A Protein kinase 2 domain is found at 849 to 1124; the sequence is LKFLQQLGKG…SFRDLALRVD (276 aa). 855–863 is a binding site for ATP; it reads LGKGNFGSV. At tyrosine 868 the chain carries Phosphotyrosine; by autocatalysis. Lysine 882 is a binding site for ATP. Phosphotyrosine; by autocatalysis is present on residues tyrosine 966 and tyrosine 972. Residue aspartate 976 is the Proton acceptor of the active site. Phosphotyrosine; by autocatalysis occurs at positions 1007 and 1008.

Belongs to the protein kinase superfamily. Tyr protein kinase family. JAK subfamily. As to quaternary structure, interacts with EPOR, LYN, SIRPA, SH2B1 and TEC. Interacts with IL23R. Interacts with SKB1. Interacts with STAM2. Interacts with IFNGR2 (via intracellular domain). Interacts with LEPR (Isoform B). Interacts with HSP90AB1; promotes functional activation in a heat shock-dependent manner. Interacts with STRA6. Interacts with RHEX; this interaction occurs in a erythropoietin (EPO)-dependent manner. Interacts with ASB2; the interaction targets JAK2 for Notch-induced proteasomal degradation. Interacts with MPL/TPOR. It depends on Mg(2+) as a cofactor. Autophosphorylated, leading to regulate its activity. Leptin promotes phosphorylation on tyrosine residues, including phosphorylation on Tyr-813. Autophosphorylation on Tyr-119 in response to EPO down-regulates its kinase activity. Autophosphorylation on Tyr-868, Tyr-966 and Tyr-972 in response to growth hormone (GH) are required for maximal kinase activity. Also phosphorylated by TEC. Phosphorylated on tyrosine residues in response to interferon gamma signaling. Phosphorylated on tyrosine residues in response to a signaling cascade that is activated by increased cellular retinol. In terms of processing, undergoes Notch-induced ubiquitination and subsequent proteasomal degradation which is mediated by ASB1 or ASB2, the substrate-recognition components of probable ECS E3 ubiquitin-protein ligase complexes. Ubiquitously expressed throughout most tissues.

The protein resides in the endomembrane system. The protein localises to the cytoplasm. It is found in the nucleus. It carries out the reaction L-tyrosyl-[protein] + ATP = O-phospho-L-tyrosyl-[protein] + ADP + H(+). Its activity is regulated as follows. Regulated by autophosphorylation, can both activate or decrease activity. Heme regulates its activity by enhancing the phosphorylation on Tyr-1007 and Tyr-1008. Functionally, non-receptor tyrosine kinase involved in various processes such as cell growth, development, differentiation or histone modifications. Mediates essential signaling events in both innate and adaptive immunity. In the cytoplasm, plays a pivotal role in signal transduction via its association with type I receptors such as growth hormone (GHR), prolactin (PRLR), leptin (LEPR), erythropoietin (EPOR), thrombopoietin receptor (MPL/TPOR); or type II receptors including IFN-alpha, IFN-beta, IFN-gamma and multiple interleukins. Following ligand-binding to cell surface receptors, phosphorylates specific tyrosine residues on the cytoplasmic tails of the receptor, creating docking sites for STATs proteins. Subsequently, phosphorylates the STATs proteins once they are recruited to the receptor. Phosphorylated STATs then form homodimer or heterodimers and translocate to the nucleus to activate gene transcription. For example, cell stimulation with erythropoietin (EPO) during erythropoiesis leads to JAK2 autophosphorylation, activation, and its association with erythropoietin receptor (EPOR) that becomes phosphorylated in its cytoplasmic domain. Then, STAT5 (STAT5A or STAT5B) is recruited, phosphorylated and activated by JAK2. Once activated, dimerized STAT5 translocates into the nucleus and promotes the transcription of several essential genes involved in the modulation of erythropoiesis. Part of a signaling cascade that is activated by increased cellular retinol and that leads to the activation of STAT5 (STAT5A or STAT5B). In addition, JAK2 mediates angiotensin-2-induced ARHGEF1 phosphorylation. Plays a role in cell cycle by phosphorylating CDKN1B. Cooperates with TEC through reciprocal phosphorylation to mediate cytokine-driven activation of FOS transcription. In the nucleus, plays a key role in chromatin by specifically mediating phosphorylation of 'Tyr-41' of histone H3 (H3Y41ph), a specific tag that promotes exclusion of CBX5 (HP1 alpha) from chromatin. Up-regulates the potassium voltage-gated channel activity of KCNA3. The sequence is that of Tyrosine-protein kinase JAK2 from Homo sapiens (Human).